The sequence spans 206 residues: MTAHDQRLTGGPAIAHRIGPNAILQLIPVLEAAFGPGAADRALAAAGVPRPGPESGMLPETQVSTLHRWLRDTHPEEAPRLLREAGLATGDYILANRIPPLAQRLIRALPAFLGARVLATAIAKHSWTFAGSGKFRVVSGRPLSFEIARNPVVAGESSDTPLCHWHAAVFERLFSRLVWPHVAVRETACCAKGAPACRFELLPKGR.

The protein operates within porphyrin-containing compound metabolism; bacteriochlorophyll biosynthesis (light-independent). The sequence is that of Bacteriochlorophyll synthase 23 kDa chain (bchJ) from Cereibacter sphaeroides (strain ATCC 17023 / DSM 158 / JCM 6121 / CCUG 31486 / LMG 2827 / NBRC 12203 / NCIMB 8253 / ATH 2.4.1.) (Rhodobacter sphaeroides).